The chain runs to 76 residues: Cytochrome c oxidase subunit 6C (76 aa).

At 4–22 (GALLPKPQMRGLLAKRLRV) the chain is on the mitochondrial matrix side. Residues 23 to 44 (HIAGAFIVALGVAAAYKFGVAE) form a helical membrane-spanning segment. At 45–76 (PRKKAYAEFYRNYDSMKDFEEMRKAGIFQSAK) the chain is on the mitochondrial intermembrane side.

This sequence belongs to the cytochrome c oxidase subunit 6c family. In terms of assembly, component of the cytochrome c oxidase (complex IV, CIV), a multisubunit enzyme composed of 14 subunits. The complex is composed of a catalytic core of 3 subunits MT-CO1, MT-CO2 and MT-CO3, encoded in the mitochondrial DNA, and 11 supernumerary subunits COX4I, COX5A, COX5B, COX6A, COX6B, COX6C, COX7A, COX7B, COX7C, COX8 and NDUFA4, which are encoded in the nuclear genome. The complex exists as a monomer or a dimer and forms supercomplexes (SCs) in the inner mitochondrial membrane with NADH-ubiquinone oxidoreductase (complex I, CI) and ubiquinol-cytochrome c oxidoreductase (cytochrome b-c1 complex, complex III, CIII), resulting in different assemblies (supercomplex SCI(1)III(2)IV(1) and megacomplex MCI(2)III(2)IV(2)). Acetylation of Lys-61 is observed in liver mitochondria from fasted mice but not from fed mice.

The protein localises to the mitochondrion inner membrane. It functions in the pathway energy metabolism; oxidative phosphorylation. Its function is as follows. Component of the cytochrome c oxidase, the last enzyme in the mitochondrial electron transport chain which drives oxidative phosphorylation. The respiratory chain contains 3 multisubunit complexes succinate dehydrogenase (complex II, CII), ubiquinol-cytochrome c oxidoreductase (cytochrome b-c1 complex, complex III, CIII) and cytochrome c oxidase (complex IV, CIV), that cooperate to transfer electrons derived from NADH and succinate to molecular oxygen, creating an electrochemical gradient over the inner membrane that drives transmembrane transport and the ATP synthase. Cytochrome c oxidase is the component of the respiratory chain that catalyzes the reduction of oxygen to water. Electrons originating from reduced cytochrome c in the intermembrane space (IMS) are transferred via the dinuclear copper A center (CU(A)) of subunit 2 and heme A of subunit 1 to the active site in subunit 1, a binuclear center (BNC) formed by heme A3 and copper B (CU(B)). The BNC reduces molecular oxygen to 2 water molecules using 4 electrons from cytochrome c in the IMS and 4 protons from the mitochondrial matrix. The protein is Cytochrome c oxidase subunit 6C (Cox6c) of Mus musculus (Mouse).